We begin with the raw amino-acid sequence, 241 residues long: Pyridoxine 5'-phosphate synthase (241 aa).

N7 provides a ligand contact to 3-amino-2-oxopropyl phosphate. 9 to 10 (DH) contributes to the 1-deoxy-D-xylulose 5-phosphate binding site. R18 lines the 3-amino-2-oxopropyl phosphate pocket. H43 serves as the catalytic Proton acceptor. Residues R45 and H50 each coordinate 1-deoxy-D-xylulose 5-phosphate. E70 (proton acceptor) is an active-site residue. T100 serves as a coordination point for 1-deoxy-D-xylulose 5-phosphate. Residue H191 is the Proton donor of the active site. Residues G192 and 213–214 (GH) each bind 3-amino-2-oxopropyl phosphate.

The protein belongs to the PNP synthase family. As to quaternary structure, homooctamer; tetramer of dimers.

It localises to the cytoplasm. It catalyses the reaction 3-amino-2-oxopropyl phosphate + 1-deoxy-D-xylulose 5-phosphate = pyridoxine 5'-phosphate + phosphate + 2 H2O + H(+). It functions in the pathway cofactor biosynthesis; pyridoxine 5'-phosphate biosynthesis; pyridoxine 5'-phosphate from D-erythrose 4-phosphate: step 5/5. Its function is as follows. Catalyzes the complicated ring closure reaction between the two acyclic compounds 1-deoxy-D-xylulose-5-phosphate (DXP) and 3-amino-2-oxopropyl phosphate (1-amino-acetone-3-phosphate or AAP) to form pyridoxine 5'-phosphate (PNP) and inorganic phosphate. The polypeptide is Pyridoxine 5'-phosphate synthase (Nostoc punctiforme (strain ATCC 29133 / PCC 73102)).